Here is a 262-residue protein sequence, read N- to C-terminus: MIHPTAQIHPTSIVEAGAKIGENVVIGPFCLVGAEVEIGAGTILHSHVVVKGITKIGRDNQIFQFASIGDTNQDLKYQGEPTRTIIGDRNRIRESVTIHRGTAQGGSVTVIGDDNLLMVNVHVAHDCRIKNRCILANNATLAGHVELDDFVIVGGMSAIHQFVIVGAHVMLGGGSMVSQDVPPYVMAQGNHAKPFGVNIEGLKRRGFDKPTLHAIRNVYKLIYRSGKTLEEVMPEIEQVAAKESAISFFVEFFKRSTRGIIR.

Belongs to the transferase hexapeptide repeat family. LpxA subfamily. In terms of assembly, homotrimer.

It localises to the cytoplasm. It catalyses the reaction a (3R)-hydroxyacyl-[ACP] + UDP-N-acetyl-alpha-D-glucosamine = a UDP-3-O-[(3R)-3-hydroxyacyl]-N-acetyl-alpha-D-glucosamine + holo-[ACP]. It functions in the pathway glycolipid biosynthesis; lipid IV(A) biosynthesis; lipid IV(A) from (3R)-3-hydroxytetradecanoyl-[acyl-carrier-protein] and UDP-N-acetyl-alpha-D-glucosamine: step 1/6. Its function is as follows. Involved in the biosynthesis of lipid A, a phosphorylated glycolipid that anchors the lipopolysaccharide to the outer membrane of the cell. The sequence is that of Acyl-[acyl-carrier-protein]--UDP-N-acetylglucosamine O-acyltransferase from Pasteurella multocida (strain Pm70).